The following is a 43-amino-acid chain: Cytochrome b559 subunit beta (43 aa).

The chain crosses the membrane as a helical span at residues 18–34; the sequence is WLAVHTLAIPTVFFLGA. Histidine 22 provides a ligand contact to heme.

The protein belongs to the PsbE/PsbF family. In terms of assembly, heterodimer of an alpha subunit and a beta subunit. PSII is composed of 1 copy each of membrane proteins PsbA, PsbB, PsbC, PsbD, PsbE, PsbF, PsbH, PsbI, PsbJ, PsbK, PsbL, PsbM, PsbT, PsbX, PsbY, PsbZ, Psb30/Ycf12, peripheral proteins PsbO, CyanoQ (PsbQ), PsbU, PsbV and a large number of cofactors. It forms dimeric complexes. The cofactor is heme b.

It localises to the cellular thylakoid membrane. This b-type cytochrome is tightly associated with the reaction center of photosystem II (PSII). PSII is a light-driven water:plastoquinone oxidoreductase that uses light energy to abstract electrons from H(2)O, generating O(2) and a proton gradient subsequently used for ATP formation. It consists of a core antenna complex that captures photons, and an electron transfer chain that converts photonic excitation into a charge separation. The polypeptide is Cytochrome b559 subunit beta (Synechococcus sp. (strain JA-2-3B'a(2-13)) (Cyanobacteria bacterium Yellowstone B-Prime)).